We begin with the raw amino-acid sequence, 885 residues long: Cytosolic carboxypeptidase-like protein 5 (885 aa).

The 414-residue stretch at 157–570 folds into the Peptidase M14 domain; sequence YPFSYSDCQD…AMAIAALDMA (414 aa). His252 and Glu255 together coordinate Zn(2+). Residues 343-402 are disordered; it reads NSQSPSEHQHSSHLPPDAPLSDPEKADSLQNRAHLGRSSSGDKPEAWTQTEVAEQKPNSV. Residues 388–402 show a composition bias toward polar residues; the sequence is AWTQTEVAEQKPNSV. His434 is a binding site for Zn(2+). Glu516 serves as the catalytic Proton donor/acceptor. Disordered regions lie at residues 605–733 and 783–839; these read TTVN…LASS and RLQA…PRPC. The segment covering 620–640 has biased composition (polar residues); it reads PPRSNNGLPVSCSENTLSRAR. 2 stretches are compositionally biased toward low complexity: residues 641-666 and 714-733; these read SFST…NSPS and PTSS…LASS. A Phosphoserine modification is found at Ser840.

It belongs to the peptidase M14 family. The cofactor is Zn(2+).

It is found in the cytoplasm. The protein resides in the cytosol. Its subcellular location is the nucleus. The protein localises to the cytoskeleton. It localises to the spindle. It is found in the midbody. The enzyme catalyses gamma-L-glutamyl-L-glutamyl-[protein] + H2O = L-glutamyl-[protein] + L-glutamate. It catalyses the reaction (L-glutamyl)(n+1)-gamma-L-glutamyl-L-glutamyl-[protein] + H2O = (L-glutamyl)(n)-gamma-L-glutamyl-L-glutamyl-[protein] + L-glutamate. The catalysed reaction is C-terminal L-alpha-aminoacyl-L-glutamyl-[tubulin] + H2O = C-terminal L-alpha-aminoacyl-[tubulin] + L-glutamate. It carries out the reaction C-terminal L-alpha-aminoacyl-L-glutamyl-L-glutamyl-[tubulin] + H2O = C-terminal L-alpha-aminoacyl-L-glutamyl-[tubulin] + L-glutamate. In terms of biological role, metallocarboxypeptidase that mediates deglutamylation of tubulin and non-tubulin target proteins. Catalyzes the removal of polyglutamate side chains present on the gamma-carboxyl group of glutamate residues within the C-terminal tail of alpha- and beta-tubulin. Cleaves alpha- and gamma-linked polyglutamate tubulin side-chain, as well as the branching point glutamate. Also catalyzes the removal of alpha-linked glutamate residues from the carboxy-terminus of alpha-tubulin. Mediates deglutamylation of nucleotidyltransferase CGAS, leading to CGAS antiviral defense response activation. The sequence is that of Cytosolic carboxypeptidase-like protein 5 (AGBL5) from Bos taurus (Bovine).